The following is an 852-amino-acid chain: Serine/threonine-protein kinase pakB (852 aa).

The disordered stretch occupies residues 1 to 334 (MEQSKRVSMM…NVGNKQDEEK (334 aa)). A Phosphoserine; by autocatalysis modification is found at Ser-8. Residues 24 to 35 (SPPPNRKPPPPN) are compositionally biased toward pro residues. Over residues 44 to 56 (SSLNSSGSSFVSP) the composition is skewed to low complexity. The span at 57-74 (SPSPSPSPQQPVKRPLPS) shows a compositional bias: pro residues. Composition is skewed to low complexity over residues 90-117 (RPQQQQPEIPVRPTTPTRTPPNLINSNG) and 124-163 (FSSSSGNSGYSSSNNNNSNSNSSINMNGNHSNGLNGGSSN). Residues 181 to 191 (TPPPPPQPTPS) are compositionally biased toward pro residues. Residues 201 to 210 (ASHNNTQHNI) are compositionally biased toward polar residues. Low complexity-rich tracts occupy residues 246-270 (SPGSTSPSLGSSNGNIPISTTSTPI) and 293-317 (SNSNSNNNNNNNNNNNNNSSNATTS). One can recognise a CRIB domain in the interval 356 to 369 (VGSPFNVKHNIHVN). A compositionally biased stretch (low complexity) spans 419-433 (AQQEQQALMQKQMQQ). The segment at 419 to 526 (AQQEQQALMQ…GILSQQQEQQ (108 aa)) is disordered. Over residues 470–485 (PQHHHQQQPPQQHHHQ) the composition is skewed to basic residues. The segment covering 486-514 (QQQQQHNNNNNNNNNNNNNNNNQQSAQQQ) has biased composition (low complexity). Positions 570–823 (GEGSTKIGEG…AKVLLNHPFL (254 aa)) constitute a Protein kinase domain. ATP is bound by residues 576–584 (IGEGAAGEV) and Lys-599. Residue Asp-691 is the Proton acceptor of the active site.

It belongs to the protein kinase superfamily. STE Ser/Thr protein kinase family. STE20 subfamily. In terms of assembly, interacts with rac1A, rac1B, rac1C, racA, racB, racC and racF1. Mg(2+) is required as a cofactor. Post-translationally, autophosphorylated at Ser-8. This may stimulate interaction with GTP-bound Rac family members which then further stimulates autophosphorylation and kinase activity.

It localises to the membrane. It is found in the cytoplasm. The protein localises to the cytoskeleton. It catalyses the reaction L-seryl-[protein] + ATP = O-phospho-L-seryl-[protein] + ADP + H(+). It carries out the reaction L-threonyl-[protein] + ATP = O-phospho-L-threonyl-[protein] + ADP + H(+). In terms of biological role, regulator of the myosin I component of the cytoskeleton: required for regulation of cytokinesis, phagocytosis and pinocytosis. The sequence is that of Serine/threonine-protein kinase pakB from Dictyostelium discoideum (Social amoeba).